Reading from the N-terminus, the 142-residue chain is Large ribosomal subunit protein uL13 (142 aa).

It belongs to the universal ribosomal protein uL13 family. Part of the 50S ribosomal subunit.

Functionally, this protein is one of the early assembly proteins of the 50S ribosomal subunit, although it is not seen to bind rRNA by itself. It is important during the early stages of 50S assembly. The sequence is that of Large ribosomal subunit protein uL13 from Histophilus somni (Haemophilus somnus).